A 415-amino-acid chain; its full sequence is Diaminopimelate decarboxylase (415 aa).

The residue at position 60 (lysine 60) is an N6-(pyridoxal phosphate)lysine. Residues glycine 239 and 273–276 each bind pyridoxal 5'-phosphate; that span reads EPGR. The substrate site is built by arginine 276, arginine 312, and tyrosine 316. Catalysis depends on cysteine 342, which acts as the Proton donor. The substrate site is built by glutamate 343 and tyrosine 370. Tyrosine 370 contributes to the pyridoxal 5'-phosphate binding site.

It belongs to the Orn/Lys/Arg decarboxylase class-II family. LysA subfamily. Homodimer. The cofactor is pyridoxal 5'-phosphate.

It catalyses the reaction meso-2,6-diaminopimelate + H(+) = L-lysine + CO2. It participates in amino-acid biosynthesis; L-lysine biosynthesis via DAP pathway; L-lysine from DL-2,6-diaminopimelate: step 1/1. Its function is as follows. Specifically catalyzes the decarboxylation of meso-diaminopimelate (meso-DAP) to L-lysine. The polypeptide is Diaminopimelate decarboxylase (Pseudomonas aeruginosa (strain ATCC 15692 / DSM 22644 / CIP 104116 / JCM 14847 / LMG 12228 / 1C / PRS 101 / PAO1)).